Consider the following 257-residue polypeptide: Triosephosphate isomerase (257 aa).

9-11 is a substrate binding site; the sequence is NWK. His-95 functions as the Electrophile in the catalytic mechanism. The active-site Proton acceptor is the Glu-168. Substrate is bound by residues Gly-174, Ser-213, and 234–235; that span reads GG.

Belongs to the triosephosphate isomerase family. As to quaternary structure, homodimer.

Its subcellular location is the cytoplasm. The catalysed reaction is D-glyceraldehyde 3-phosphate = dihydroxyacetone phosphate. It participates in carbohydrate biosynthesis; gluconeogenesis. It functions in the pathway carbohydrate degradation; glycolysis; D-glyceraldehyde 3-phosphate from glycerone phosphate: step 1/1. Its function is as follows. Involved in the gluconeogenesis. Catalyzes stereospecifically the conversion of dihydroxyacetone phosphate (DHAP) to D-glyceraldehyde-3-phosphate (G3P). This chain is Triosephosphate isomerase, found in Acidithiobacillus ferrooxidans (strain ATCC 23270 / DSM 14882 / CIP 104768 / NCIMB 8455) (Ferrobacillus ferrooxidans (strain ATCC 23270)).